Reading from the N-terminus, the 281-residue chain is Release factor glutamine methyltransferase (281 aa).

S-adenosyl-L-methionine is bound by residues Glu142 and Asn184. 184–187 (NPPY) is a substrate binding site. Residues 261-281 (AADHPDLNNRPRFATARKALP) are disordered.

The protein belongs to the protein N5-glutamine methyltransferase family. PrmC subfamily.

It catalyses the reaction L-glutaminyl-[peptide chain release factor] + S-adenosyl-L-methionine = N(5)-methyl-L-glutaminyl-[peptide chain release factor] + S-adenosyl-L-homocysteine + H(+). Its function is as follows. Methylates the class 1 translation termination release factors RF1/PrfA and RF2/PrfB on the glutamine residue of the universally conserved GGQ motif. This Streptomyces coelicolor (strain ATCC BAA-471 / A3(2) / M145) protein is Release factor glutamine methyltransferase.